Reading from the N-terminus, the 364-residue chain is Isoflavone 4'-O-methyltransferase (364 aa).

Residues 206-209 (VGGG), Asp-230, 230-231 (DQ), 250-251 (DM), and Lys-264 contribute to the S-adenosyl-L-methionine site. His-268 functions as the Proton acceptor in the catalytic mechanism.

The protein belongs to the class I-like SAM-binding methyltransferase superfamily. Cation-independent O-methyltransferase family. COMT subfamily. As to quaternary structure, homodimer.

The enzyme catalyses a 4'-hydroxyisoflavone + S-adenosyl-L-methionine = a 4'-methoxyisoflavone + S-adenosyl-L-homocysteine + H(+). The catalysed reaction is (2R,3S)-2,4',7-trihydroxyisoflavanone + S-adenosyl-L-methionine = (2R,3S)-2,7-dihydroxy-4'-methoxyisoflavanone + S-adenosyl-L-homocysteine + H(+). 2-hydroxyisoflavanone 4'-O-methyltransferase involved in the biosynthesis of the phytoalexin medicarpin. Has also an in vitro (+)-6a-hydroxymaackiain-3-0-methyltransferase activity, converting the pterocarpan 6a-hydroxymaackiain into pisatin. No activity with di- or trihydroxylated isoflavones, including daidzein and genistein, or with (-)-medicarpin and maackiain. The dual activity for either 3- or 4'-O-methylation depends upon substrate availability. This chain is Isoflavone 4'-O-methyltransferase (HI4'OMT), found in Medicago truncatula (Barrel medic).